A 140-amino-acid chain; its full sequence is Large ribosomal subunit protein bL17 (140 aa).

A disordered region spans residues 120–140 (EDAKGQDSGPVMVDEDDFAEA).

The protein belongs to the bacterial ribosomal protein bL17 family. Part of the 50S ribosomal subunit. Contacts protein L32.

The protein is Large ribosomal subunit protein bL17 of Erythrobacter litoralis (strain HTCC2594).